A 55-amino-acid chain; its full sequence is ATP synthase F(0) complex subunit 8 (55 aa).

A helical transmembrane segment spans residues 4-24 (LNPAPWFMIFMFTWAIFLTIL). The tract at residues 34–55 (PNEPSPQGMTTPKTAPWNWPWH) is disordered.

It belongs to the ATPase protein 8 family. Component of the ATP synthase complex composed at least of ATP5F1A/subunit alpha, ATP5F1B/subunit beta, ATP5MC1/subunit c (homooctomer), MT-ATP6/subunit a, MT-ATP8/subunit 8, ATP5ME/subunit e, ATP5MF/subunit f, ATP5MG/subunit g, ATP5MK/subunit k, ATP5MJ/subunit j, ATP5F1C/subunit gamma, ATP5F1D/subunit delta, ATP5F1E/subunit epsilon, ATP5PF/subunit F6, ATP5PB/subunit b, ATP5PD/subunit d, ATP5PO/subunit OSCP. ATP synthase complex consists of a soluble F(1) head domain (subunits alpha(3) and beta(3)) - the catalytic core - and a membrane F(0) domain - the membrane proton channel (subunits c, a, 8, e, f, g, k and j). These two domains are linked by a central stalk (subunits gamma, delta, and epsilon) rotating inside the F1 region and a stationary peripheral stalk (subunits F6, b, d, and OSCP).

It is found in the mitochondrion membrane. Functionally, subunit 8, of the mitochondrial membrane ATP synthase complex (F(1)F(0) ATP synthase or Complex V) that produces ATP from ADP in the presence of a proton gradient across the membrane which is generated by electron transport complexes of the respiratory chain. ATP synthase complex consist of a soluble F(1) head domain - the catalytic core - and a membrane F(1) domain - the membrane proton channel. These two domains are linked by a central stalk rotating inside the F(1) region and a stationary peripheral stalk. During catalysis, ATP synthesis in the catalytic domain of F(1) is coupled via a rotary mechanism of the central stalk subunits to proton translocation. In vivo, can only synthesize ATP although its ATP hydrolase activity can be activated artificially in vitro. Part of the complex F(0) domain. This Gadus morhua (Atlantic cod) protein is ATP synthase F(0) complex subunit 8.